The primary structure comprises 169 residues: MTRKQRRMTIIGGSLAVLALAAALVLNALRDSIVFFSTPTMVAEKHVQAGKRFRLGGLVQPGSLQRGDNLAVSFEVADGNAKLPVAYKGILPDLFREGQGVVAEGALDANGVFKADTVLAKHDETYMPKDVADALKKQGHWKDDYGGKASDGVKPAATTAQGNPQGAVR.

The Cytoplasmic segment spans residues 1 to 7 (MTRKQRR). A helical; Signal-anchor for type II membrane protein membrane pass occupies residues 8-28 (MTIIGGSLAVLALAAALVLNA). Residues 29–169 (LRDSIVFFST…AQGNPQGAVR (141 aa)) are Periplasmic-facing. Positions 122 and 126 each coordinate heme. Positions 143 to 169 (DDYGGKASDGVKPAATTAQGNPQGAVR) are disordered. The span at 158–169 (TTAQGNPQGAVR) shows a compositional bias: polar residues.

It belongs to the CcmE/CycJ family.

Its subcellular location is the cell inner membrane. Its function is as follows. Heme chaperone required for the biogenesis of c-type cytochromes. Transiently binds heme delivered by CcmC and transfers the heme to apo-cytochromes in a process facilitated by CcmF and CcmH. The protein is Cytochrome c-type biogenesis protein CcmE of Bradyrhizobium diazoefficiens (strain JCM 10833 / BCRC 13528 / IAM 13628 / NBRC 14792 / USDA 110).